We begin with the raw amino-acid sequence, 209 residues long: Large ribosomal subunit protein uL3 (209 aa).

Positions 132–153 (ATHGNSLSHRVPGSIGQNQTPG) are disordered. An N5-methylglutamine modification is found at glutamine 150.

This sequence belongs to the universal ribosomal protein uL3 family. As to quaternary structure, part of the 50S ribosomal subunit. Forms a cluster with proteins L14 and L19. Post-translationally, methylated by PrmB.

Its function is as follows. One of the primary rRNA binding proteins, it binds directly near the 3'-end of the 23S rRNA, where it nucleates assembly of the 50S subunit. This is Large ribosomal subunit protein uL3 from Erwinia tasmaniensis (strain DSM 17950 / CFBP 7177 / CIP 109463 / NCPPB 4357 / Et1/99).